Reading from the N-terminus, the 213-residue chain is CDP-diacylglycerol--inositol 3-phosphatidyltransferase (213 aa).

The Cytoplasmic segment spans residues 1-5 (MPEEN). Residues 6 to 26 (IFLFVPNLIGYARIVFAIISF) form a helical membrane-spanning segment. Position 27 (Tyr-27) is a topological domain, lumenal. A helical membrane pass occupies residues 28–48 (FMPCCPFTASSFYLLSGLLDA). Positions 47 and 50 each coordinate Mg(2+). Residues 49–73 (FDGHAARALNQGTRFGAMLDMLTDR) are Cytoplasmic-facing. Gly-51, Arg-55, and Thr-61 together coordinate a CDP-1,2-diacyl-sn-glycerol. 2 residues coordinate Mg(2+): Asp-68 and Asp-72. Residue Asp-72 is the Proton acceptor of the active site. The helical transmembrane segment at 74–94 (CATMCLLVNLALLYPRATLLF) threads the bilayer. A topological domain (lumenal) is located at residue Gln-95. A helical transmembrane segment spans residues 96 to 116 (LSMSLDVASHWLHLHSSVVRG). Residues 117–139 (SESHKMIDLSGNPVLRIYYTSRP) lie on the Cytoplasmic side of the membrane. A helical membrane pass occupies residues 140–160 (ALFTLCAGNELFYCLLYLFNF). At 161 to 174 (SEGPLVGSVGLFRM) the chain is on the lumenal side. Residues 175–195 (GLWITAPIALLKSIISVIHLV) form a helical membrane-spanning segment. Over 196 to 213 (TAARNMAALDAADRAKKK) the chain is Cytoplasmic.

This sequence belongs to the CDP-alcohol phosphatidyltransferase class-I family. Requires Mn(2+) as cofactor. It depends on Mg(2+) as a cofactor. Detected in liver (at protein level). Widely expressed. Highly expressed in the brain and kidney; lower levels in heart, spleen, lung, liver, skeletal muscle and testis.

The protein resides in the endoplasmic reticulum membrane. Its subcellular location is the cell membrane. It carries out the reaction a CDP-1,2-diacyl-sn-glycerol + myo-inositol = a 1,2-diacyl-sn-glycero-3-phospho-(1D-myo-inositol) + CMP + H(+). Catalyzes the biosynthesis of phosphatidylinositol (PtdIns) as well as PtdIns:inositol exchange reaction. May thus act to reduce an excessive cellular PtdIns content. The exchange activity is due to the reverse reaction of PtdIns synthase and is dependent on CMP, which is tightly bound to the enzyme. The sequence is that of CDP-diacylglycerol--inositol 3-phosphatidyltransferase from Rattus norvegicus (Rat).